We begin with the raw amino-acid sequence, 347 residues long: Dihydroorotate dehydrogenase (quinone) (347 aa).

FMN is bound by residues 62–66 (AGLDK) and Thr-86. Lys-66 contacts substrate. 111-115 (NRMGF) provides a ligand contact to substrate. Asn-142 and Asn-175 together coordinate FMN. Asn-175 lines the substrate pocket. Ser-178 serves as the catalytic Nucleophile. Position 180 (Asn-180) interacts with substrate. FMN is bound by residues Lys-220 and Thr-248. Residue 249–250 (NT) coordinates substrate. Residues Gly-271, Gly-300, and 321–322 (YS) contribute to the FMN site.

The protein belongs to the dihydroorotate dehydrogenase family. Type 2 subfamily. As to quaternary structure, monomer. Requires FMN as cofactor.

Its subcellular location is the cell membrane. The catalysed reaction is (S)-dihydroorotate + a quinone = orotate + a quinol. It participates in pyrimidine metabolism; UMP biosynthesis via de novo pathway; orotate from (S)-dihydroorotate (quinone route): step 1/1. Catalyzes the conversion of dihydroorotate to orotate with quinone as electron acceptor. The protein is Dihydroorotate dehydrogenase (quinone) of Dechloromonas aromatica (strain RCB).